A 511-amino-acid chain; its full sequence is Serine/threonine-protein kinase Nek3 (511 aa).

At Met1 the chain carries N-acetylmethionine. The segment at 1–282 is interaction with VAV2; the sequence is MDNYTVLRVI…EQILDEIKIS (282 aa). Residues 4–255 form the Protein kinase domain; the sequence is YTVLRVIGQG…ATTLLCRGSL (252 aa). ATP is bound by residues 10-18 and Lys33; that span reads IGQGSFGRA. Residue Asp125 is the Proton acceptor of the active site. Thr159 carries the post-translational modification Phosphothreonine; by autocatalysis. Disordered regions lie at residues 299 to 370 and 443 to 511; these read LGEA…GPSS and GPLS…GERA. The span at 309-321 shows a compositional bias: basic and acidic residues; the sequence is EEERGRKCSHTEL. A compositionally biased stretch (acidic residues) spans 472–485; the sequence is LDEEDTDFEEDNEN. The residue at position 477 (Thr477) is a Phosphothreonine. Residues 498–511 are compositionally biased toward gly residues; the sequence is YGDGPGGQLLGERA.

It belongs to the protein kinase superfamily. NEK Ser/Thr protein kinase family. NIMA subfamily. As to quaternary structure, interacts with PXN, PRLR, VAV1 and VAV2 and this interaction is prolactin-dependent. The cofactor is Mg(2+). In terms of processing, phosphorylation at Thr-477 regulates its catalytic activity. As to expression, brain.

Its subcellular location is the cytoplasm. It localises to the cell projection. It is found in the axon. It catalyses the reaction L-seryl-[protein] + ATP = O-phospho-L-seryl-[protein] + ADP + H(+). The catalysed reaction is L-threonyl-[protein] + ATP = O-phospho-L-threonyl-[protein] + ADP + H(+). In terms of biological role, protein kinase which influences neuronal morphogenesis and polarity through effects on microtubules. Regulates microtubule acetylation in neurons. Contributes to prolactin-mediated phosphorylation of PXN and VAV2. The protein is Serine/threonine-protein kinase Nek3 (Nek3) of Mus musculus (Mouse).